We begin with the raw amino-acid sequence, 276 residues long: Putative pyruvate, phosphate dikinase regulatory protein (276 aa).

153–160 (GISRTSKT) provides a ligand contact to ADP.

This sequence belongs to the pyruvate, phosphate/water dikinase regulatory protein family. PDRP subfamily.

It carries out the reaction N(tele)-phospho-L-histidyl/L-threonyl-[pyruvate, phosphate dikinase] + ADP = N(tele)-phospho-L-histidyl/O-phospho-L-threonyl-[pyruvate, phosphate dikinase] + AMP + H(+). The enzyme catalyses N(tele)-phospho-L-histidyl/O-phospho-L-threonyl-[pyruvate, phosphate dikinase] + phosphate + H(+) = N(tele)-phospho-L-histidyl/L-threonyl-[pyruvate, phosphate dikinase] + diphosphate. In terms of biological role, bifunctional serine/threonine kinase and phosphorylase involved in the regulation of the pyruvate, phosphate dikinase (PPDK) by catalyzing its phosphorylation/dephosphorylation. This is Putative pyruvate, phosphate dikinase regulatory protein from Brucella anthropi (strain ATCC 49188 / DSM 6882 / CCUG 24695 / JCM 21032 / LMG 3331 / NBRC 15819 / NCTC 12168 / Alc 37) (Ochrobactrum anthropi).